The sequence spans 61 residues: Short neurotoxin 1 (61 aa).

Over residues 1–16 the composition is skewed to polar residues; the sequence is LECHNQQSSQPPTTKS. The tract at residues 1-20 is disordered; that stretch reads LECHNQQSSQPPTTKSCPGD. Intrachain disulfides connect Cys-3-Cys-23, Cys-17-Cys-40, Cys-42-Cys-53, and Cys-54-Cys-59.

It belongs to the three-finger toxin family. Short-chain subfamily. Type I alpha-neurotoxin sub-subfamily. Expressed by the venom gland.

Its subcellular location is the secreted. Functionally, binds to muscle nicotinic acetylcholine receptor (nAChR) and inhibit acetylcholine from binding to the receptor, thereby impairing neuromuscular transmission. The chain is Short neurotoxin 1 from Hemachatus haemachatus (Rinkhals).